Here is a 262-residue protein sequence, read N- to C-terminus: Small ribosomal subunit protein eS1 (262 aa).

This sequence belongs to the eukaryotic ribosomal protein eS1 family. Component of the small ribosomal subunit. Mature ribosomes consist of a small (40S) and a large (60S) subunit. The 40S subunit contains about 33 different proteins and 1 molecule of RNA (18S). The 60S subunit contains about 49 different proteins and 3 molecules of RNA (25S, 5.8S and 5S).

It is found in the cytoplasm. This chain is Small ribosomal subunit protein eS1, found in Plasmodium vivax (strain Salvador I).